A 413-amino-acid polypeptide reads, in one-letter code: Divalent metal cation transporter MntH (413 aa).

Residues 1 to 19 (MTDNRVENSSGRAARKLRL) lie on the Cytoplasmic side of the membrane. The chain crosses the membrane as a helical span at residues 20–39 (ALMGPAFIAAIGYIDPGNFA). The Periplasmic portion of the chain corresponds to 40 to 51 (TNIQAGASFGYQ). Residues 52-71 (LLWVVVWANLMAMLIQILSA) form a helical membrane-spanning segment. The Cytoplasmic portion of the chain corresponds to 72-95 (KLGIATGKNLAEQIRDHYPRPVVW). Residues 96-118 (FYWVQAEIIAMATDLAEFIGAAI) traverse the membrane as a helical segment. The Periplasmic segment spans residues 119-125 (GFKLILG). The chain crosses the membrane as a helical span at residues 126-145 (VSLLQGAVLTGIATFLILML). Residues 146-155 (QRRGQKPLEK) are Cytoplasmic-facing. Residues 156–175 (VIGGLLLFVAAAYIVELFFS) traverse the membrane as a helical segment. Residues 176 to 196 (QPDMAQLGKGMVIPALPNPEA) lie on the Periplasmic side of the membrane. Residues 197-220 (VFLAAGVLGATIMPHVIYLHSSLT) form a helical membrane-spanning segment. Residues 221–238 (QHLHGGTRQQRYSATKWD) are Cytoplasmic-facing. The helical transmembrane segment at 239 to 258 (VAIAMTIAGFVNLAMMATAA) threads the bilayer. Over 259–276 (AAFHFSGHTGIADLDQAY) the chain is Periplasmic. The chain crosses the membrane as a helical span at residues 277 to 297 (LTLEPLLSHAAATVFGLSLVA). At 298–327 (AGLSSTVVGTLAGQVVMQGFVRFHIPLWVR) the chain is on the cytoplasmic side. Residues 328-344 (RTITMLPSFIVILMGLD) traverse the membrane as a helical segment. Topologically, residues 345–350 (PTRILV) are periplasmic. A helical transmembrane segment spans residues 351–370 (MSQVLLSFGIALALVPLLIF). At 371-387 (TSNATLMGELVNTRRVK) the chain is on the cytoplasmic side. Residues 388-406 (QIGWIIVVLVVALNIWLLV) traverse the membrane as a helical segment. Residues 407–413 (GTVMGLS) are Periplasmic-facing.

It belongs to the NRAMP family.

Its subcellular location is the cell inner membrane. H(+)-stimulated, divalent metal cation uptake system. This is Divalent metal cation transporter MntH from Salmonella schwarzengrund (strain CVM19633).